We begin with the raw amino-acid sequence, 352 residues long: uncharacterized protein (352 aa).

The first 22 residues, 1–22 (MIFKKTILIFIISFFFISISFA), serve as a signal peptide directing secretion. A compositionally biased stretch (low complexity) spans 25–47 (SSSSSSSSSSSSSSWSSSESSSS). A disordered region spans residues 25-49 (SSSSSSSSSSSSSSWSSSESSSSPA). Asn-76, Asn-110, Asn-182, Asn-212, and Asn-223 each carry an N-linked (GlcNAc...) asparagine glycan.

It localises to the secreted. This is an uncharacterized protein from Dictyostelium discoideum (Social amoeba).